The sequence spans 102 residues: Urease subunit beta (102 aa).

It belongs to the urease beta subunit family. In terms of assembly, heterotrimer of UreA (gamma), UreB (beta) and UreC (alpha) subunits. Three heterotrimers associate to form the active enzyme.

The protein resides in the cytoplasm. It carries out the reaction urea + 2 H2O + H(+) = hydrogencarbonate + 2 NH4(+). It participates in nitrogen metabolism; urea degradation; CO(2) and NH(3) from urea (urease route): step 1/1. This Acinetobacter baumannii (strain AB307-0294) protein is Urease subunit beta.